A 165-amino-acid polypeptide reads, in one-letter code: uncharacterized protein (165 aa).

A helical transmembrane segment spans residues 16 to 36 (ASISSILNFFFFYIMEYFVAV).

It belongs to the asfivirus F165R family.

The protein localises to the host membrane. This is an uncharacterized protein from African swine fever virus (strain Badajoz 1971 Vero-adapted) (Ba71V).